The primary structure comprises 378 residues: 3-dehydroquinate synthase (378 aa).

NAD(+) contacts are provided by residues 115 to 119, 139 to 140, K152, and K161; these read GVVGD and TS. 3 residues coordinate Zn(2+): E194, H256, and H275.

The protein belongs to the sugar phosphate cyclases superfamily. Dehydroquinate synthase family. It depends on Co(2+) as a cofactor. The cofactor is Zn(2+). Requires NAD(+) as cofactor.

The protein resides in the cytoplasm. The enzyme catalyses 7-phospho-2-dehydro-3-deoxy-D-arabino-heptonate = 3-dehydroquinate + phosphate. Its pathway is metabolic intermediate biosynthesis; chorismate biosynthesis; chorismate from D-erythrose 4-phosphate and phosphoenolpyruvate: step 2/7. In terms of biological role, catalyzes the conversion of 3-deoxy-D-arabino-heptulosonate 7-phosphate (DAHP) to dehydroquinate (DHQ). This chain is 3-dehydroquinate synthase, found in Brucella abortus biovar 1 (strain 9-941).